A 117-amino-acid chain; its full sequence is 16 kDa protein (117 aa).

In Tobacco rattle virus (strain PLB), this protein is 16 kDa protein.